We begin with the raw amino-acid sequence, 305 residues long: UDP-3-O-acyl-N-acetylglucosamine deacetylase (305 aa).

The Zn(2+) site is built by His79, His238, and Asp242. The active-site Proton donor is His265.

Belongs to the LpxC family. Requires Zn(2+) as cofactor.

It catalyses the reaction a UDP-3-O-[(3R)-3-hydroxyacyl]-N-acetyl-alpha-D-glucosamine + H2O = a UDP-3-O-[(3R)-3-hydroxyacyl]-alpha-D-glucosamine + acetate. Its pathway is glycolipid biosynthesis; lipid IV(A) biosynthesis; lipid IV(A) from (3R)-3-hydroxytetradecanoyl-[acyl-carrier-protein] and UDP-N-acetyl-alpha-D-glucosamine: step 2/6. Catalyzes the hydrolysis of UDP-3-O-myristoyl-N-acetylglucosamine to form UDP-3-O-myristoylglucosamine and acetate, the committed step in lipid A biosynthesis. In Colwellia psychrerythraea (strain 34H / ATCC BAA-681) (Vibrio psychroerythus), this protein is UDP-3-O-acyl-N-acetylglucosamine deacetylase.